An 88-amino-acid polypeptide reads, in one-letter code: Small ribosomal subunit protein bS20 (88 aa).

The disordered stretch occupies residues 1–27 (MANSKSAKKRALQSEKRRQHNASRRSM).

The protein belongs to the bacterial ribosomal protein bS20 family.

Its function is as follows. Binds directly to 16S ribosomal RNA. The chain is Small ribosomal subunit protein bS20 from Shewanella frigidimarina (strain NCIMB 400).